The primary structure comprises 448 residues: tRNA modification GTPase MnmE (448 aa).

Residues Arg24, Glu81, and Lys120 each coordinate (6S)-5-formyl-5,6,7,8-tetrahydrofolate. The TrmE-type G domain occupies 216 to 373 (GLNVVLVGAP…LKRTLLREAG (158 aa)). Asn226 lines the K(+) pocket. GTP-binding positions include 226 to 231 (NVGKSS), 245 to 251 (TDIAGTT), and 270 to 273 (DTAG). Mg(2+) is bound at residue Ser230. The K(+) site is built by Thr245, Ile247, and Thr250. Position 251 (Thr251) interacts with Mg(2+). Position 448 (Lys448) interacts with (6S)-5-formyl-5,6,7,8-tetrahydrofolate.

The protein belongs to the TRAFAC class TrmE-Era-EngA-EngB-Septin-like GTPase superfamily. TrmE GTPase family. In terms of assembly, homodimer. Heterotetramer of two MnmE and two MnmG subunits. K(+) serves as cofactor.

The protein resides in the cytoplasm. Exhibits a very high intrinsic GTPase hydrolysis rate. Involved in the addition of a carboxymethylaminomethyl (cmnm) group at the wobble position (U34) of certain tRNAs, forming tRNA-cmnm(5)s(2)U34. The chain is tRNA modification GTPase MnmE from Neisseria meningitidis serogroup C / serotype 2a (strain ATCC 700532 / DSM 15464 / FAM18).